Consider the following 429-residue polypeptide: D-amino acid dehydrogenase (429 aa).

3–17 lines the FAD pocket; sequence VLILGSGVIGTTTAW.

The protein belongs to the DadA oxidoreductase family. The cofactor is FAD.

It carries out the reaction a D-alpha-amino acid + A + H2O = a 2-oxocarboxylate + AH2 + NH4(+). It functions in the pathway amino-acid degradation; D-alanine degradation; NH(3) and pyruvate from D-alanine: step 1/1. Its function is as follows. Oxidative deamination of D-amino acids. The chain is D-amino acid dehydrogenase from Xanthomonas campestris pv. campestris (strain B100).